The following is a 783-amino-acid chain: DNA ligase (783 aa).

NAD(+)-binding positions include 42-46, 91-92, and Glu-125; these read DAEYD and SL. Lys-127 (N6-AMP-lysine intermediate) is an active-site residue. NAD(+) contacts are provided by Arg-148, Glu-185, Lys-302, and Lys-326. Residues Cys-421, Cys-423, Cys-445, and Cys-451 each coordinate Zn(2+). The region spanning 705-783 is the BRCT domain; that stretch reads KTDTAVAGKT…EDEWLELVAG (79 aa).

Belongs to the NAD-dependent DNA ligase family. LigA subfamily. Mg(2+) serves as cofactor. It depends on Mn(2+) as a cofactor.

The catalysed reaction is NAD(+) + (deoxyribonucleotide)n-3'-hydroxyl + 5'-phospho-(deoxyribonucleotide)m = (deoxyribonucleotide)n+m + AMP + beta-nicotinamide D-nucleotide.. Its function is as follows. DNA ligase that catalyzes the formation of phosphodiester linkages between 5'-phosphoryl and 3'-hydroxyl groups in double-stranded DNA using NAD as a coenzyme and as the energy source for the reaction. It is essential for DNA replication and repair of damaged DNA. This Caulobacter vibrioides (strain ATCC 19089 / CIP 103742 / CB 15) (Caulobacter crescentus) protein is DNA ligase.